A 35-amino-acid chain; its full sequence is Alpha-amanitin proprotein 2 (35 aa).

Residues 1–10 constitute a propeptide that is removed on maturation; that stretch reads MFDTNSTRLP. Ile11 bears the (3R,4R)-4,5-dihydroxyisoleucine; in form alpha-amanitin mark. Ile11 is modified ((3R,4S)-4-hydroxyisoleucine; in form gamma-amanitin). Positions 11 to 18 form a cross-link, cyclopeptide (Ile-Pro); the sequence is IWGIGCNP. A cross-link (2'-cysteinyl-6'-hydroxytryptophan sulfoxide (Trp-Cys)) is located at residues 12-16; sequence WGIGC. Pro18 is modified (4-hydroxyproline). A propeptide spanning residues 19-35 is cleaved from the precursor; it reads WTAEHVDQTLVSGNDIC.

It belongs to the MSDIN fungal toxin family. Post-translationally, processed by the macrocyclase-peptidase enzyme POPB to yield a toxic bicyclic octapeptide. POPB first removes 10 residues from the N-terminus. Conformational trapping of the remaining peptide forces the enzyme to release this intermediate rather than proceed to macrocyclization. The enzyme rebinds the remaining peptide in a different conformation and catalyzes macrocyclization of the N-terminal 8 residues.

Its function is as follows. Major toxin belonging to the bicyclic octapeptides amatoxins that acts by binding non-competitively to RNA polymerase II and greatly slowing the elongation of transcripts from target promoters. This is Alpha-amanitin proprotein 2 from Galerina marginata (strain CBS 339.88).